A 1347-amino-acid chain; its full sequence is Probable serine/threonine-protein kinase DDB_G0288147 (1347 aa).

The Phorbol-ester/DAG-type zinc finger occupies N12–C67. 3 disordered regions span residues P262–S316, S333–K402, and D463–N485. A compositionally biased stretch (polar residues) spans D271–R282. Low complexity-rich tracts occupy residues K286–S316, S333–L342, and T350–T361. Basic residues-rich tracts occupy residues N366–K382 and N389–K402. Residues N464 to N485 show a composition bias toward low complexity. The 256-residue stretch at V599–L854 folds into the Protein kinase domain. Residues I605 to V613 and K626 each bind ATP. D724 acts as the Proton acceptor in catalysis. 2 disordered regions span residues S937–P1241 and S1282–P1310. A compositionally biased stretch (acidic residues) spans I976 to D986. 2 stretches are compositionally biased toward low complexity: residues N1004 to V1015 and S1024 to N1062. 2 stretches are compositionally biased toward polar residues: residues L1063 to M1083 and L1118 to G1127. Composition is skewed to low complexity over residues D1128–P1241 and S1282–D1291.

Belongs to the protein kinase superfamily. TKL Ser/Thr protein kinase family.

It catalyses the reaction L-seryl-[protein] + ATP = O-phospho-L-seryl-[protein] + ADP + H(+). The catalysed reaction is L-threonyl-[protein] + ATP = O-phospho-L-threonyl-[protein] + ADP + H(+). The protein is Probable serine/threonine-protein kinase DDB_G0288147 of Dictyostelium discoideum (Social amoeba).